Reading from the N-terminus, the 709-residue chain is Elongation factor G (709 aa).

A tr-type G domain is found at Asn10 to Leu286. GTP-binding positions include Ala19–Thr26, Asp83–His87, and Asn137–Asp140.

The protein belongs to the TRAFAC class translation factor GTPase superfamily. Classic translation factor GTPase family. EF-G/EF-2 subfamily.

It is found in the cytoplasm. Its function is as follows. Catalyzes the GTP-dependent ribosomal translocation step during translation elongation. During this step, the ribosome changes from the pre-translocational (PRE) to the post-translocational (POST) state as the newly formed A-site-bound peptidyl-tRNA and P-site-bound deacylated tRNA move to the P and E sites, respectively. Catalyzes the coordinated movement of the two tRNA molecules, the mRNA and conformational changes in the ribosome. The sequence is that of Elongation factor G from Corynebacterium glutamicum (strain R).